Here is a 501-residue protein sequence, read N- to C-terminus: Ammonium transporter 2 member 2 (501 aa).

11 helical membrane-spanning segments follow: residues 35-55, 64-84, 140-160, 174-194, 203-223, 238-258, 274-294, 298-318, 322-342, 356-376, and 412-432; these read VAAT…YGSI, SAFM…LVGF, LVLF…GSLL, LWLL…GFLY, GGYV…YWVG, ILLM…FNGG, TNVS…IFFG, VIGA…GAGL, WSAM…MMIL, LAVF…TGLL, and FVTV…GLFI.

It belongs to the ammonia transporter channel (TC 1.A.11.2) family.

The protein resides in the membrane. In terms of biological role, involved in ammonium transport. The protein is Ammonium transporter 2 member 2 (AMT2-2) of Oryza sativa subsp. japonica (Rice).